Consider the following 201-residue polypeptide: Holliday junction resolvase RecU (201 aa).

Mg(2+) is bound by residues T85, D87, D100, and Q119.

The protein belongs to the RecU family. Mg(2+) is required as a cofactor.

The protein resides in the cytoplasm. The catalysed reaction is Endonucleolytic cleavage at a junction such as a reciprocal single-stranded crossover between two homologous DNA duplexes (Holliday junction).. Endonuclease that resolves Holliday junction intermediates in genetic recombination. Cleaves mobile four-strand junctions by introducing symmetrical nicks in paired strands. Promotes annealing of linear ssDNA with homologous dsDNA. Required for DNA repair, homologous recombination and chromosome segregation. The chain is Holliday junction resolvase RecU from Pediococcus pentosaceus (strain ATCC 25745 / CCUG 21536 / LMG 10740 / 183-1w).